We begin with the raw amino-acid sequence, 38 residues long: Large ribosomal subunit protein bL36 (38 aa).

Belongs to the bacterial ribosomal protein bL36 family.

This is Large ribosomal subunit protein bL36 from Ralstonia nicotianae (strain ATCC BAA-1114 / GMI1000) (Ralstonia solanacearum).